The chain runs to 304 residues: Non-specific ribonucleoside hydrolase RihC (304 aa).

H233 is an active-site residue.

The protein belongs to the IUNH family. RihC subfamily.

Functionally, hydrolyzes both purine and pyrimidine ribonucleosides with a broad-substrate specificity. This chain is Non-specific ribonucleoside hydrolase RihC, found in Escherichia fergusonii (strain ATCC 35469 / DSM 13698 / CCUG 18766 / IAM 14443 / JCM 21226 / LMG 7866 / NBRC 102419 / NCTC 12128 / CDC 0568-73).